The sequence spans 382 residues: Dual-specificity RNA methyltransferase RlmN (382 aa).

Residue glutamate 96 is the Proton acceptor of the active site. The region spanning glutamine 102–aspartate 342 is the Radical SAM core domain. A disulfide bridge links cysteine 109 with cysteine 345. Cysteine 116, cysteine 120, and cysteine 123 together coordinate [4Fe-4S] cluster. S-adenosyl-L-methionine-binding positions include glycine 170–glutamate 171, serine 202, serine 224–histidine 226, and asparagine 302. Catalysis depends on cysteine 345, which acts as the S-methylcysteine intermediate.

This sequence belongs to the radical SAM superfamily. RlmN family. [4Fe-4S] cluster is required as a cofactor.

Its subcellular location is the cytoplasm. It carries out the reaction adenosine(2503) in 23S rRNA + 2 reduced [2Fe-2S]-[ferredoxin] + 2 S-adenosyl-L-methionine = 2-methyladenosine(2503) in 23S rRNA + 5'-deoxyadenosine + L-methionine + 2 oxidized [2Fe-2S]-[ferredoxin] + S-adenosyl-L-homocysteine. It catalyses the reaction adenosine(37) in tRNA + 2 reduced [2Fe-2S]-[ferredoxin] + 2 S-adenosyl-L-methionine = 2-methyladenosine(37) in tRNA + 5'-deoxyadenosine + L-methionine + 2 oxidized [2Fe-2S]-[ferredoxin] + S-adenosyl-L-homocysteine. Functionally, specifically methylates position 2 of adenine 2503 in 23S rRNA and position 2 of adenine 37 in tRNAs. m2A2503 modification seems to play a crucial role in the proofreading step occurring at the peptidyl transferase center and thus would serve to optimize ribosomal fidelity. The polypeptide is Dual-specificity RNA methyltransferase RlmN (Pseudomonas savastanoi pv. phaseolicola (strain 1448A / Race 6) (Pseudomonas syringae pv. phaseolicola (strain 1448A / Race 6))).